A 195-amino-acid polypeptide reads, in one-letter code: CASP-like protein 1E2 (195 aa).

The Cytoplasmic portion of the chain corresponds to 1-29 (MEVESKTSFGGMESKSKEVKVVTGGKLRP). Residues 30 to 50 (FDLVLRVVALALTLVAAVLLG) form a helical membrane-spanning segment. The Extracellular segment spans residues 51–82 (VDKQTKVVSLQLLPTLPPMDVPVTAKWRYLSA). The helical transmembrane segment at 83–103 (FVYFVVSNAIACSYAALSLLL) threads the bilayer. The Cytoplasmic segment spans residues 104–122 (SVGNSKGNKGLGLAITVMD). The chain crosses the membrane as a helical span at residues 123–143 (LVMVALLFSSNGAAGAIGLMG). Residues 144 to 165 (YEGNSRVRWGKVCNVFGKFCNQ) are Extracellular-facing. A helical transmembrane segment spans residues 166 to 186 (VAVALGLSFFGGLAFFLLVVM). At 187–195 (AAFALNKRH) the chain is on the cytoplasmic side.

This sequence belongs to the Casparian strip membrane proteins (CASP) family. As to quaternary structure, homodimer and heterodimers.

It localises to the cell membrane. This Vitis vinifera (Grape) protein is CASP-like protein 1E2.